Reading from the N-terminus, the 502-residue chain is Histidine--tRNA ligase (502 aa).

The protein belongs to the class-II aminoacyl-tRNA synthetase family. Homodimer.

The protein localises to the cytoplasm. The enzyme catalyses tRNA(His) + L-histidine + ATP = L-histidyl-tRNA(His) + AMP + diphosphate + H(+). This is Histidine--tRNA ligase from Brucella ovis (strain ATCC 25840 / 63/290 / NCTC 10512).